Reading from the N-terminus, the 387-residue chain is Cytochrome b (387 aa).

4 consecutive transmembrane segments (helical) span residues 32-52 (FGSL…TLAM), 76-98 (WLVR…LHIG), 113-133 (VWAI…LGYV), and 179-199 (FFAL…MHLI). Heme b contacts are provided by H82 and H96. Heme b-binding residues include H183 and H197. H202 provides a ligand contact to a ubiquinone. Helical transmembrane passes span 226–246 (YLFK…SFVF), 290–310 (LLGV…PITD), 322–342 (LSKF…KLGA), and 349–369 (FIEL…IIVP).

The protein belongs to the cytochrome b family. Fungal cytochrome b-c1 complex contains 10 subunits; 3 respiratory subunits, 2 core proteins and 5 low-molecular weight proteins. Cytochrome b-c1 complex is a homodimer. Heme b is required as a cofactor.

It localises to the mitochondrion inner membrane. Component of the ubiquinol-cytochrome c reductase complex (complex III or cytochrome b-c1 complex) that is part of the mitochondrial respiratory chain. The b-c1 complex mediates electron transfer from ubiquinol to cytochrome c. Contributes to the generation of a proton gradient across the mitochondrial membrane that is then used for ATP synthesis. The chain is Cytochrome b (COB) from Podospora anserina (strain S / ATCC MYA-4624 / DSM 980 / FGSC 10383) (Pleurage anserina).